The sequence spans 2212 residues: Voltage-dependent P/Q-type calcium channel subunit alpha-1A (2212 aa).

Residues 1–100 lie on the Cytoplasmic side of the membrane; that stretch reads MARFGDEMPG…KYAKKITEWP (100 aa). Residues 87-365 form an I repeat; sequence NVVRKYAKKI…LVLGVLSGEF (279 aa). The helical transmembrane segment at 101 to 119 threads the bilayer; that stretch reads PFEYMILATIIANCIVLAL. Residues 120-138 are Extracellular-facing; the sequence is EQHLPDDDKTPMSERLDDT. The chain crosses the membrane as a helical span at residues 139–156; that stretch reads EPYFIGIFCFEAGIKIVA. Residues 157–168 lie on the Cytoplasmic side of the membrane; it reads LGFAFHKGSYLR. Residues 169–184 traverse the membrane as a helical segment; it reads NGWNVMDFVVVLTGIL. At 185 to 192 the chain is on the extracellular side; it reads ATVGTEFD. A helical membrane pass occupies residues 193 to 211; the sequence is LRTLRAVRVLRPLKLVSGI. Topologically, residues 212 to 230 are cytoplasmic; sequence PSLQVVLKSIMKAMIPLLQ. The helical transmembrane segment at 231 to 250 threads the bilayer; it reads IGLLLFFAILIFAIIGLEFY. At 251 to 337 the chain is on the extracellular side; the sequence is MGKFHTTCFE…NSNDASGNTW (87 aa). Asn285 is a glycosylation site (N-linked (GlcNAc...) asparagine). Glu320 serves as a coordination point for Ca(2+). Residues 338 to 362 traverse the membrane as a helical segment; the sequence is NWLYFIPLIIIGSFFMLNLVLGVLS. Over 363 to 489 the chain is Cytoplasmic; the sequence is GEFAKERERV…FYIRRMVKTQ (127 aa). A binding to the beta subunit region spans residues 385 to 402; sequence QQIERELNGYMEWISKAE. Thr411 carries the post-translational modification Phosphothreonine. Phosphoserine occurs at positions 450 and 453. The stretch at 475–719 is one II repeat; that stretch reads ERRMRFYIRR…VFLAIAVDNL (245 aa). Residues 490–509 traverse the membrane as a helical segment; that stretch reads AFYWTVLSLVALNTLWLAIV. Topologically, residues 510 to 523 are extracellular; the sequence is HYNQPEWLSDFLYY. The chain crosses the membrane as a helical span at residues 524–543; it reads AEFIFLGLFMSEMFIKMYGL. Residues 544–551 lie on the Cytoplasmic side of the membrane; the sequence is GTRPYFHS. The helical transmembrane segment at 552–570 threads the bilayer; it reads SFNCFDCGVIIGSIFEVIW. At 571–580 the chain is on the extracellular side; the sequence is AVIKPGTSFG. The chain crosses the membrane as a helical span at residues 581–599; sequence ISVLRALRLLRIFKVTKYW. The Cytoplasmic segment spans residues 600–618; the sequence is ASLRNLVVSLLNSMKSIIS. The chain crosses the membrane as a helical span at residues 619–638; the sequence is LLFLLFLFIVVFALLGMQLF. Topologically, residues 639 to 691 are extracellular; sequence GGQFNFDEGTPPTNFDTFPAAIMTVFQILTGEDWNEVMYDEIKSQGGVQGGMV. Glu670 lines the Ca(2+) pocket. A helical membrane pass occupies residues 692–716; sequence FSIYFIVLTLFGNYTLLNVFLAIAV. The Cytoplasmic portion of the chain corresponds to 717-1190; that stretch reads DNLANAQELT…TNPLRRLCHY (474 aa). A phosphoserine mark is found at Ser752, Ser755, and Ser792. Composition is skewed to basic and acidic residues over residues 814–824, 850–862, 871–924, and 932–958; these read PDVKTHLDRPL, RPRE…DARR, APGR…EGEP, and RPGD…RAAD. Disordered stretches follow at residues 814-1117 and 1137-1170; these read PDVK…RKPE and VNKN…KPMP. 3 positions are modified to phosphoserine: Ser1038, Ser1042, and Ser1051. A compositionally biased stretch (polar residues) spans 1056–1073; that stretch reads GNSTNPGPALATNPQNAA. Over residues 1074–1083 the composition is skewed to low complexity; that stretch reads SRRTPNNPGN. Over residues 1094-1111 the composition is skewed to polar residues; that stretch reads ENSLIVTNPSSTQPNSAK. The span at 1153–1163 shows a compositional bias: acidic residues; that stretch reads KKEEEEADPGE. One copy of the III repeat lies at 1182–1465; the sequence is NPLRRLCHYI…IFVALIIITF (284 aa). A helical transmembrane segment spans residues 1191–1214; it reads ILNLRYFEMCILMVIAMSSIALAA. Residues 1215–1231 lie on the Extracellular side of the membrane; it reads EDPVQPNAPRNNVLRYF. The chain crosses the membrane as a helical span at residues 1232-1251; sequence DYVFTGVFTFEMVIKMIDLG. At 1252–1258 the chain is on the cytoplasmic side; it reads LVLHQGA. The helical transmembrane segment at 1259 to 1282 threads the bilayer; the sequence is YFRDLWNILDFIVVSGALVAFAFT. Topologically, residues 1283 to 1293 are extracellular; it reads GNSKGKDINTI. Residues 1294–1311 form a helical membrane-spanning segment; sequence KSLRVLRVLRPLKTIKRL. At 1312-1330 the chain is on the cytoplasmic side; sequence PKLKAVFDCVVNSLKNVFN. The chain crosses the membrane as a helical span at residues 1331–1350; sequence ILIVYMLFMFIFAVVAVQLF. Over 1351–1437 the chain is Extracellular; sequence KGKFFHCTDE…QGPSPGYRME (87 aa). Glu1411 provides a ligand contact to Ca(2+). The chain crosses the membrane as a helical span at residues 1438–1462; the sequence is MSIFYVVYFVVFPFFFVNIFVALII. Topologically, residues 1463–1518 are cytoplasmic; that stretch reads ITFQEQGDKMMEEYSLEKNERACIDFAISAKPLTRHMPQNKQSFQYRMWQFVVSPP. The stretch at 1502 to 1765 is one IV repeat; sequence NKQSFQYRMW…LFVAVIMDNF (264 aa). The helical transmembrane segment at 1519–1537 threads the bilayer; sequence FEYTIMAMIALNTIVLMMK. Over 1538-1551 the chain is Extracellular; the sequence is FYGASVAYENALRV. A helical transmembrane segment spans residues 1552–1573; the sequence is FNIVFTSLFSLECVLKVMAFGI. At 1574–1580 the chain is on the cytoplasmic side; the sequence is LNYFRDA. The chain crosses the membrane as a helical span at residues 1581 to 1600; sequence WNIFDFVTVLGSITDILVTE. Over 1601–1607 the chain is Extracellular; sequence FGNNFIN. N-linked (GlcNAc...) asparagine glycosylation occurs at Asn1607. A helical transmembrane segment spans residues 1608 to 1626; that stretch reads LSFLRLFRAARLIKLLRQG. The Cytoplasmic portion of the chain corresponds to 1627-1645; it reads YTIRILLWTFVQSFKALPY. A helical transmembrane segment spans residues 1646 to 1665; that stretch reads VCLLIAMLFFIYAIIGMQVF. Residues 1666 to 1737 are Extracellular-facing; sequence GNIGIDGEDE…IQKPECGNEF (72 aa). A helical transmembrane segment spans residues 1738–1763; that stretch reads AYFYFVSFIFLCSFLMLNLFVAVIMD. Residues 1764–2212 are Cytoplasmic-facing; sequence NFEYLTRDSS…EGREHATHRQ (449 aa). Thr1935 is modified (phosphothreonine). The segment at 1940 to 2212 is disordered; the sequence is QRMEPPSPTQ…EGREHATHRQ (273 aa). Polar residues-rich tracts occupy residues 1948–1963 and 1972–1997; these read TQEG…STQL and QESS…TGTW. Phosphoserine is present on residues Ser1998, Ser2016, Ser2028, Ser2030, Ser2071, and Ser2091. Residues 2008-2017 show a composition bias toward polar residues; that stretch reads PNSQPNSQSV. Residues 2018–2034 show a composition bias toward basic and acidic residues; sequence EMREMGTDGYSDSEHYL. Over residues 2064-2073 the composition is skewed to polar residues; the sequence is LSTISDTSPM. 2 stretches are compositionally biased toward basic and acidic residues: residues 2085–2102 and 2143–2153; these read RRLD…ENQR and PSKDRDQDRGR. Residues 2154–2172 show a composition bias toward basic residues; sequence PKDRKHRPHHHHHHHHHHP. The segment covering 2173-2212 has biased composition (basic and acidic residues); sequence PAPDRERYAQERPDTGRARAREQRWSRSPSEGREHATHRQ.

It belongs to the calcium channel alpha-1 subunit (TC 1.A.1.11) family. CACNA1A subfamily. In terms of assembly, voltage-dependent calcium channels are multisubunit complexes, consisting of alpha-1, alpha-2, beta and delta subunits in a 1:1:1:1 ratio. The channel activity is directed by the pore-forming and voltage-sensitive alpha-1 subunit. In many cases, this subunit is sufficient to generate voltage-sensitive calcium channel activity. The auxiliary subunits beta and alpha-2/delta linked by a disulfide bridge regulate the channel activity. Interacts (via C-terminal CDB motif) with CABP1 in the pre- and postsynaptic membranes. Interacts with the spider omega-agatoxin-IVA (AC P30288). Interacts with TSPOAP1. Brain specific. Purkinje cells contain predominantly P-type VSCC, the Q-type being a prominent calcium current in cerebellar granule cells. Also found in heart, in kidney distal convoluted tubule (DCT), and in pituitary.

It is found in the cell membrane. The enzyme catalyses Ca(2+)(in) = Ca(2+)(out). Its function is as follows. Voltage-sensitive calcium channels (VSCC) mediate the entry of calcium ions into excitable cells and are also involved in a variety of calcium-dependent processes, including muscle contraction, hormone or neurotransmitter release, gene expression, cell motility, cell division and cell death. The isoform alpha-1A gives rise to P and/or Q-type calcium currents. P/Q-type calcium channels belong to the 'high-voltage activated' (HVA) group and are specifically blocked by the spider omega-agatoxin-IVA (AC P30288). They are however insensitive to dihydropyridines (DHP). The polypeptide is Voltage-dependent P/Q-type calcium channel subunit alpha-1A (Rattus norvegicus (Rat)).